The sequence spans 368 residues: MSQDLFNVPIFFILFRETTEAAIIISVLLSFLKRMFNTESPVYKRLRNQVWIGGAAGLFICLCIGAAFIAVYYTVLNDLWGNSEDIWEGVFSLVAVIMITAMGLAMLKTERMQEKWKVKLAKAMQKSNSEKSSFKEKLQKYAFFVLPFITVLREGLEAVVFIGGVSLGIQGKSIPIAAIMGIICGCLVGFLIYRGGSLIQLRWFFVFSTVVLYLVAAGLMAKGVGYLEQNAWNQVIGGEAADVISYRVSTAVWHVSWGDPEANNDTSGGWQIFNAILGWNNTATYGSIISYCLYWLFVCCYLVFSYFKEKRAAIRKAEAGEWDDGDEALENAKQYIGNDGEFIVEDKESDEEANNHPKEKIESDAIKA.

Transmembrane regions (helical) follow at residues 8–28 (VPIF…ISVL), 50–70 (VWIG…AFIA), 86–106 (IWEG…GLAM), 142–162 (AFFV…VVFI), 173–193 (SIPI…FLIY), 204–224 (FFVF…AKGV), and 287–307 (SIIS…FSYF). The interval 346–368 (DKESDEEANNHPKEKIESDAIKA) is disordered. Positions 353 to 368 (ANNHPKEKIESDAIKA) are enriched in basic and acidic residues.

Belongs to the oxidase-dependent Fe transporter (OFeT) (TC 9.A.10.1) family.

It is found in the cell membrane. In terms of biological role, high affinity iron permease required for iron uptake in iron-depleted environments. Required for full virulence in mice. This chain is High affinity iron permease 1, found in Rhizopus delemar (strain RA 99-880 / ATCC MYA-4621 / FGSC 9543 / NRRL 43880) (Mucormycosis agent).